A 237-amino-acid chain; its full sequence is Concanavalin V (237 aa).

The Mn(2+) site is built by E8 and D10. The Ca(2+) site is built by D10, Y12, N14, and D19. N14 contributes to the a carbohydrate binding site. The Mn(2+) site is built by D19 and H24. Residues G70, 98 to 100, D208, and R228 each bind a carbohydrate; that span reads GLY.

This sequence belongs to the leguminous lectin family. As to quaternary structure, homotetramer. Post-translationally, concanavalin A-like lectins of the Diocleinae subtribe undergo proteolytic processing referred to as circular permutation. The propeptide is split into an N-terminal and a C-terminal part, the gamma and beta chain, respectively. These are then religated in beta-gamma order to form the mature alpha chain. The beta and gamma chains can often be detected in cell extracts. Residues 1-118 of the mature chain, as displayed here, probably constitute the beta chain in the propeptide, residues 119-237 the gamma chain.

Its function is as follows. D-mannose/D-glucose-binding lectin which binds alpha-methyl-D-mannoside, D-mannose and D-glucose in that order. Also binds to serum fetuin and ovalbumin. Has hemagglutinating activity towards rabbit erythrocytes. Is not toxic towards larvae of the brine shrimp Artemia. Induces relaxation in rat endothelized aorta. Shows a transient edematogenic effect in rat. In Canavalia cathartica (Jackbean), this protein is Concanavalin V.